Here is a 152-residue protein sequence, read N- to C-terminus: Deoxyuridine 5'-triphosphate nucleotidohydrolase (152 aa).

Residues 72–74 (RSG), asparagine 85, and 89–91 (TID) each bind substrate.

It belongs to the dUTPase family. Requires Mg(2+) as cofactor.

The enzyme catalyses dUTP + H2O = dUMP + diphosphate + H(+). Its pathway is pyrimidine metabolism; dUMP biosynthesis; dUMP from dCTP (dUTP route): step 2/2. In terms of biological role, this enzyme is involved in nucleotide metabolism: it produces dUMP, the immediate precursor of thymidine nucleotides and it decreases the intracellular concentration of dUTP so that uracil cannot be incorporated into DNA. This is Deoxyuridine 5'-triphosphate nucleotidohydrolase from Rhodopseudomonas palustris (strain HaA2).